Reading from the N-terminus, the 631-residue chain is Extracellular metalloproteinase mep (631 aa).

An N-terminal signal peptide occupies residues 1-19 (MHGLRLVCSIGTLPLVILA). Residues 20 to 241 (YPAASLHTTS…VHGVVDYVAD (222 aa)) constitute a propeptide that is removed on maturation. N-linked (GlcNAc...) asparagine glycans are attached at residues asparagine 282, asparagine 332, and asparagine 364. Histidine 425 is a Zn(2+) binding site. Residue glutamate 426 is part of the active site. Position 429 (histidine 429) interacts with Zn(2+). Residues asparagine 470 and asparagine 505 are each glycosylated (N-linked (GlcNAc...) asparagine).

This sequence belongs to the peptidase M36 family. Requires Zn(2+) as cofactor.

The protein resides in the secreted. Secreted metalloproteinase that allows assimilation of proteinaceous substrates. The protein is Extracellular metalloproteinase mep (mep) of Aspergillus niger (strain ATCC MYA-4892 / CBS 513.88 / FGSC A1513).